Reading from the N-terminus, the 189-residue chain is Keratin-associated protein 5-2 (189 aa).

8 tandem repeats follow at residues 21-24 (CCKP), 27-30 (CCKP), 33-36 (CCVP), 134-137 (CCKP), 144-147 (CCKP), 159-162 (CCKP), 169-172 (CCKP), and 179-182 (CCAP). An 8 X 4 AA repeats of C-C-X-P region spans residues 27–182 (CCKPVCCCVP…CCCQSSCCAP (156 aa)).

Belongs to the KRTAP type 5 family. Interacts with hair keratins.

Its function is as follows. In the hair cortex, hair keratin intermediate filaments are embedded in an interfilamentous matrix, consisting of hair keratin-associated protein (KRTAP), which are essential for the formation of a rigid and resistant hair shaft through their extensive disulfide bond cross-linking with abundant cysteine residues of hair keratins. The matrix proteins include the high-sulfur and high-glycine-tyrosine keratins. The protein is Keratin-associated protein 5-2 of Mus musculus (Mouse).